Reading from the N-terminus, the 71-residue chain is Augerpeptide-s7a (71 aa).

Residues 1 to 20 (MSALKFVLICGLVLLLIETI) form the signal peptide. Residues 21 to 29 (PGVSLNLMR) constitute a propeptide that is removed on maturation. Disulfide bonds link cysteine 36-cysteine 48, cysteine 42-cysteine 65, and cysteine 47-cysteine 68.

In terms of tissue distribution, expressed by the venom duct.

It is found in the secreted. Functionally, elicits an uncoordinated twisting syndrome when injected into C.elegans, but has no effect on mice. The polypeptide is Augerpeptide-s7a (Terebra subulata (Chocolate spotted auger)).